The primary structure comprises 595 residues: Alginate biosynthesis sensor protein KinB (595 aa).

The Cytoplasmic segment spans residues 1–12; it reads MSMPLPMKLRTR. The helical transmembrane segment at 13 to 33 threads the bilayer; it reads LFLSISALITVSLFGLLLGLF. Over 34-167 the chain is Periplasmic; sequence SVMQLGRAQE…SDAETSARHR (134 aa). Residues 168–188 traverse the membrane as a helical segment; that stretch reads AYLVAGLLGLVGVAILLIGFV. Over 189 to 595 the chain is Cytoplasmic; sequence TAHSIARRFG…GARFYMLLPV (407 aa). One can recognise an HAMP domain in the interval 195 to 247; it reads RRFGAPIETLARAADRIGEGDFDVTLPMTNVAEVGQLTRRFGLMAEALRQYRK. The PAS domain maps to 258–323; sequence RRLQAVLDSI…AVEKALLGEV (66 aa). In terms of domain architecture, PAC spans 327–369; sequence AMPDLVVDVAGESRLLAWSLYPVTHPGGHSVGAVLVVRDVTEQ. One can recognise a Histidine kinase domain in the interval 382 to 595; it reads RASHELRTPV…GARFYMLLPV (214 aa). The residue at position 385 (His385) is a Phosphohistidine; by autocatalysis.

Autophosphorylated.

The protein resides in the cell inner membrane. The catalysed reaction is ATP + protein L-histidine = ADP + protein N-phospho-L-histidine.. Functionally, member of the two-component regulatory system AlgB/KinB involved in regulation of alginate biosynthesis genes. KinB functions as a membrane-associated protein kinase that phosphorylates AlgB, probably in response to environmental signals. This chain is Alginate biosynthesis sensor protein KinB (kinB), found in Pseudomonas aeruginosa.